The primary structure comprises 382 residues: Succinate--CoA ligase [ADP-forming] subunit beta 1 (382 aa).

The ATP-grasp domain occupies 9–235 (KQIFAKHGIR…ATEEDPLERE (227 aa)). Residues Lys45, 52 to 54 (GRG), Glu91, Leu94, and Glu99 each bind ATP. The Mg(2+) site is built by Asn191 and Asp204. Asn255 is a substrate binding site.

This sequence belongs to the succinate/malate CoA ligase beta subunit family. In terms of assembly, heterotetramer of two alpha and two beta subunits. Requires Mg(2+) as cofactor.

It carries out the reaction succinate + ATP + CoA = succinyl-CoA + ADP + phosphate. The catalysed reaction is GTP + succinate + CoA = succinyl-CoA + GDP + phosphate. Its pathway is carbohydrate metabolism; tricarboxylic acid cycle; succinate from succinyl-CoA (ligase route): step 1/1. Succinyl-CoA synthetase functions in the citric acid cycle (TCA), coupling the hydrolysis of succinyl-CoA to the synthesis of either ATP or GTP and thus represents the only step of substrate-level phosphorylation in the TCA. The beta subunit provides nucleotide specificity of the enzyme and binds the substrate succinate, while the binding sites for coenzyme A and phosphate are found in the alpha subunit. The protein is Succinate--CoA ligase [ADP-forming] subunit beta 1 of Archaeoglobus fulgidus (strain ATCC 49558 / DSM 4304 / JCM 9628 / NBRC 100126 / VC-16).